Reading from the N-terminus, the 161-residue chain is Dihydrofolate reductase (161 aa).

Positions 2–161 (KISLISAISN…YNFCFEILSR (160 aa)) constitute a DHFR domain. Residue 6–8 (ISA) participates in substrate binding. NADP(+) is bound by residues 7 to 8 (SA) and 15 to 20 (IGHNNK). Position 28 (D28) interacts with substrate. Residue 44–47 (GRLT) participates in NADP(+) binding. R59 lines the substrate pocket. Residues 64-66 (ISH) and 96-101 (IGGSKI) each bind NADP(+). A substrate-binding site is contributed by T115.

Belongs to the dihydrofolate reductase family.

It carries out the reaction (6S)-5,6,7,8-tetrahydrofolate + NADP(+) = 7,8-dihydrofolate + NADPH + H(+). Its pathway is cofactor biosynthesis; tetrahydrofolate biosynthesis; 5,6,7,8-tetrahydrofolate from 7,8-dihydrofolate: step 1/1. In terms of biological role, key enzyme in folate metabolism. Catalyzes an essential reaction for de novo glycine and purine synthesis, and for DNA precursor synthesis. The polypeptide is Dihydrofolate reductase (folA) (Buchnera aphidicola subsp. Schizaphis graminum (strain Sg)).